Reading from the N-terminus, the 372-residue chain is Alanine dehydrogenase 1 (372 aa).

His-94 is an active-site residue. 170–200 (TYVIFGGGVAATNAANVALGLNAKVIIIELN) serves as a coordination point for NAD(+).

The protein belongs to the AlaDH/PNT family.

The enzyme catalyses L-alanine + NAD(+) + H2O = pyruvate + NH4(+) + NADH + H(+). Its pathway is amino-acid degradation; L-alanine degradation via dehydrogenase pathway; NH(3) and pyruvate from L-alanine: step 1/1. Functionally, may play a role in cell wall synthesis as L-alanine is an important constituent of the peptidoglycan layer. This chain is Alanine dehydrogenase 1 (ald1), found in Staphylococcus aureus (strain NCTC 8325 / PS 47).